The chain runs to 35 residues: Probable endonuclease 4 (35 aa).

Glu15 serves as a coordination point for Zn(2+).

This sequence belongs to the AP endonuclease 2 family. Zn(2+) is required as a cofactor.

It carries out the reaction Endonucleolytic cleavage to 5'-phosphooligonucleotide end-products.. Functionally, endonuclease IV plays a role in DNA repair. It cleaves phosphodiester bonds at apurinic or apyrimidinic (AP) sites, generating a 3'-hydroxyl group and a 5'-terminal sugar phosphate. In Yersinia enterocolitica, this protein is Probable endonuclease 4 (nfo).